Reading from the N-terminus, the 249-residue chain is Tumor necrosis factor ligand superfamily member 12 (249 aa).

The Cytoplasmic segment spans residues 1–21; the sequence is MAARRSQRRRGRRGEPGTALL. Residues 22-42 traverse the membrane as a helical; Signal-anchor for type II membrane protein segment; sequence VPLALGLGLALACLGLLLAVV. The Extracellular portion of the chain corresponds to 43–249; sequence SLGSRASLSA…LTYFGLFQVH (207 aa). The tract at residues 55-85 is disordered; the sequence is PAQEELVAEEDQDPSELNPQTEESQDPAPFL. A compositionally biased stretch (acidic residues) spans 56 to 68; sequence AQEELVAEEDQDP. Residues 107 to 248 form the THD domain; it reads IAAHYEVHPR…FLTYFGLFQV (142 aa). Asn139 carries N-linked (GlcNAc...) asparagine glycosylation. Cysteines 191 and 210 form a disulfide.

It belongs to the tumor necrosis factor family. As to quaternary structure, homotrimer. Interacts with the angiogenic factor AGGF1/VG5Q. The soluble form derives from the membrane form by proteolytic processing. In terms of tissue distribution, highly expressed in adult heart, pancreas, skeletal muscle, brain, colon, small intestine, lung, ovary, prostate, spleen, lymph node, appendix and peripheral blood lymphocytes. Low expression in kidney, testis, liver, placenta, thymus and bone marrow. Also detected in fetal kidney, liver, lung and brain.

It localises to the cell membrane. The protein localises to the secreted. Its function is as follows. Binds to FN14 and possibly also to TNRFSF12/APO3. Weak inducer of apoptosis in some cell types. Mediates NF-kappa-B activation. Promotes angiogenesis and the proliferation of endothelial cells. Also involved in induction of inflammatory cytokines. Promotes IL8 secretion. This Homo sapiens (Human) protein is Tumor necrosis factor ligand superfamily member 12 (TNFSF12).